A 531-amino-acid polypeptide reads, in one-letter code: L-aspartate oxidase (531 aa).

FAD is bound by residues 11–14 (SGAA), K33, 40–47 (NSVYAQGG), 151–152 (TA), and D205. The Proton donor/acceptor role is filled by R272. FAD-binding positions include E353 and 369–370 (SL).

The protein belongs to the FAD-dependent oxidoreductase 2 family. NadB subfamily. As to quaternary structure, monomer. Homodimer. FAD is required as a cofactor.

It localises to the cytoplasm. The catalysed reaction is L-aspartate + O2 = iminosuccinate + H2O2. It catalyses the reaction fumarate + L-aspartate = iminosuccinate + succinate. The protein operates within cofactor biosynthesis; NAD(+) biosynthesis; iminoaspartate from L-aspartate (oxidase route): step 1/1. Catalyzes the oxidation of L-aspartate to iminoaspartate, the first step in the de novo biosynthesis of NAD(+). Can use either oxygen or fumarate as electron acceptors, which allows the enzyme to be functional under aerobic and anaerobic conditions. This Bacillus subtilis (strain 168) protein is L-aspartate oxidase.